Consider the following 1026-residue polypeptide: Multidrug resistance protein MdtC (1026 aa).

Helical transmembrane passes span 15-35 (ILIA…LPVA), 333-353 (EVEE…FLFL), 360-380 (LIPA…MYLC), 387-407 (LSLM…IVVL), 431-451 (VGFT…PLLL), 463-483 (FAVT…TLTP), 528-548 (LVGV…IAIP), 853-873 (LILI…LYES), 897-917 (LFNA…IGIV), 953-973 (PIMM…LSGG), and 984-1004 (ITIV…TPVV).

Belongs to the resistance-nodulation-cell division (RND) (TC 2.A.6) family. MdtC subfamily. Part of a tripartite efflux system composed of MdtA, MdtB and MdtC. MdtC forms a heteromultimer with MdtB.

It localises to the cell inner membrane. The sequence is that of Multidrug resistance protein MdtC from Salmonella agona (strain SL483).